A 159-amino-acid chain; its full sequence is ATP synthase subunit b (159 aa).

Residues 7 to 27 (DFIWTLINFFVLLFILKILLY) form a helical membrane-spanning segment.

The protein belongs to the ATPase B chain family. F-type ATPases have 2 components, F(1) - the catalytic core - and F(0) - the membrane proton channel. F(1) has five subunits: alpha(3), beta(3), gamma(1), delta(1), epsilon(1). F(0) has three main subunits: a(1), b(2) and c(10-14). The alpha and beta chains form an alternating ring which encloses part of the gamma chain. F(1) is attached to F(0) by a central stalk formed by the gamma and epsilon chains, while a peripheral stalk is formed by the delta and b chains.

It is found in the cell membrane. In terms of biological role, f(1)F(0) ATP synthase produces ATP from ADP in the presence of a proton or sodium gradient. F-type ATPases consist of two structural domains, F(1) containing the extramembraneous catalytic core and F(0) containing the membrane proton channel, linked together by a central stalk and a peripheral stalk. During catalysis, ATP synthesis in the catalytic domain of F(1) is coupled via a rotary mechanism of the central stalk subunits to proton translocation. Component of the F(0) channel, it forms part of the peripheral stalk, linking F(1) to F(0). The polypeptide is ATP synthase subunit b (Carboxydothermus hydrogenoformans (strain ATCC BAA-161 / DSM 6008 / Z-2901)).